The following is a 559-amino-acid chain: CTP synthase (559 aa).

Positions 1 to 283 (MSTSRTTTNN…DTFLIRRLDL (283 aa)) are amidoligase domain. CTP is bound at residue serine 25. Residue serine 25 participates in UTP binding. Residues 26–31 (SLGKGL) and aspartate 83 contribute to the ATP site. The Mg(2+) site is built by aspartate 83 and glutamate 157. Residues 164–166 (DIE), 204–209 (KTKPTQ), and lysine 240 each bind CTP. UTP-binding positions include 204–209 (KTKPTQ) and lysine 240. The 250-residue stretch at 308 to 557 (TVGIVGKYVD…VAAALAAAVT (250 aa)) folds into the Glutamine amidotransferase type-1 domain. Glycine 371 lines the L-glutamine pocket. Residue cysteine 398 is the Nucleophile; for glutamine hydrolysis of the active site. Residues 399–402 (LGLQ), glutamate 421, and arginine 482 contribute to the L-glutamine site. Catalysis depends on residues histidine 530 and glutamate 532.

This sequence belongs to the CTP synthase family. In terms of assembly, homotetramer.

It carries out the reaction UTP + L-glutamine + ATP + H2O = CTP + L-glutamate + ADP + phosphate + 2 H(+). The catalysed reaction is L-glutamine + H2O = L-glutamate + NH4(+). The enzyme catalyses UTP + NH4(+) + ATP = CTP + ADP + phosphate + 2 H(+). It functions in the pathway pyrimidine metabolism; CTP biosynthesis via de novo pathway; CTP from UDP: step 2/2. Allosterically activated by GTP, when glutamine is the substrate; GTP has no effect on the reaction when ammonia is the substrate. The allosteric effector GTP functions by stabilizing the protein conformation that binds the tetrahedral intermediate(s) formed during glutamine hydrolysis. Inhibited by the product CTP, via allosteric rather than competitive inhibition. Functionally, catalyzes the ATP-dependent amination of UTP to CTP with either L-glutamine or ammonia as the source of nitrogen. Regulates intracellular CTP levels through interactions with the four ribonucleotide triphosphates. The polypeptide is CTP synthase (Corynebacterium efficiens (strain DSM 44549 / YS-314 / AJ 12310 / JCM 11189 / NBRC 100395)).